Here is a 419-residue protein sequence, read N- to C-terminus: Septin-2 (419 aa).

The 267-residue stretch at 40–306 (NGFVFNVMCI…ELYRQKRLEQ (267 aa)) folds into the Septin-type G domain. Positions 50–57 (GETGLGKS) are G1 motif. GTP contacts are provided by residues 50-57 (GETGLGKS), S79, G105, 186-194 (KADTISKVE), G240, and R255. The segment at 102 to 105 (DTVG) is G3 motif. The G4 motif stretch occupies residues 185 to 188 (AKAD). An important for dimerization region spans residues 259–269 (WGTVQVENETH).

Belongs to the TRAFAC class TrmE-Era-EngA-EngB-Septin-like GTPase superfamily. Septin GTPase family. May assemble into a multicomponent structure.

It is found in the cytoplasm. It localises to the cytoskeleton. The protein localises to the spindle. Its function is as follows. Involved in cytokinesis. The polypeptide is Septin-2 (Drosophila melanogaster (Fruit fly)).